The sequence spans 479 residues: Ribosomal RNA small subunit methyltransferase F (479 aa).

S-adenosyl-L-methionine is bound by residues 125-131 (AAAPGSK), glutamate 149, aspartate 176, and aspartate 194. Residue cysteine 247 is the Nucleophile of the active site.

It belongs to the class I-like SAM-binding methyltransferase superfamily. RsmB/NOP family.

It localises to the cytoplasm. It catalyses the reaction cytidine(1407) in 16S rRNA + S-adenosyl-L-methionine = 5-methylcytidine(1407) in 16S rRNA + S-adenosyl-L-homocysteine + H(+). Its function is as follows. Specifically methylates the cytosine at position 1407 (m5C1407) of 16S rRNA. In Escherichia coli (strain K12), this protein is Ribosomal RNA small subunit methyltransferase F (rsmF).